Here is a 191-residue protein sequence, read N- to C-terminus: GTP cyclohydrolase 1 (191 aa).

The Zn(2+) site is built by Cys80, His83, and Cys151.

It belongs to the GTP cyclohydrolase I family. As to quaternary structure, toroid-shaped homodecamer, composed of two pentamers of five dimers.

The enzyme catalyses GTP + H2O = 7,8-dihydroneopterin 3'-triphosphate + formate + H(+). The protein operates within cofactor biosynthesis; 7,8-dihydroneopterin triphosphate biosynthesis; 7,8-dihydroneopterin triphosphate from GTP: step 1/1. The chain is GTP cyclohydrolase 1 from Leifsonia xyli subsp. xyli (strain CTCB07).